The primary structure comprises 565 residues: CTP synthase (565 aa).

The amidoligase domain stretch occupies residues 1 to 272 (MARPKNVKHI…DLRVMKKLGL (272 aa)). S18 contacts CTP. S18 contributes to the UTP binding site. Residue 19–24 (SLGKGI) participates in ATP binding. L-glutamine is bound at residue Y59. D76 provides a ligand contact to ATP. Residues D76 and E146 each contribute to the Mg(2+) site. Residues 153-155 (DIE), 193-198 (KTKPTQ), and K229 contribute to the CTP site. UTP is bound by residues 193-198 (KTKPTQ) and K229. Residues 299 to 543 (TIGVCGKYTE…VQAAKEFAMG (245 aa)) enclose the Glutamine amidotransferase type-1 domain. G363 contacts L-glutamine. The active-site Nucleophile; for glutamine hydrolysis is the C390. L-glutamine is bound by residues 391–394 (LGMQ), E414, and R471. Active-site residues include H516 and E518.

This sequence belongs to the CTP synthase family. Homotetramer.

The enzyme catalyses UTP + L-glutamine + ATP + H2O = CTP + L-glutamate + ADP + phosphate + 2 H(+). It carries out the reaction L-glutamine + H2O = L-glutamate + NH4(+). The catalysed reaction is UTP + NH4(+) + ATP = CTP + ADP + phosphate + 2 H(+). It functions in the pathway pyrimidine metabolism; CTP biosynthesis via de novo pathway; CTP from UDP: step 2/2. Its activity is regulated as follows. Allosterically activated by GTP, when glutamine is the substrate; GTP has no effect on the reaction when ammonia is the substrate. The allosteric effector GTP functions by stabilizing the protein conformation that binds the tetrahedral intermediate(s) formed during glutamine hydrolysis. Inhibited by the product CTP, via allosteric rather than competitive inhibition. Functionally, catalyzes the ATP-dependent amination of UTP to CTP with either L-glutamine or ammonia as the source of nitrogen. Regulates intracellular CTP levels through interactions with the four ribonucleotide triphosphates. This is CTP synthase from Chlorobaculum parvum (strain DSM 263 / NCIMB 8327) (Chlorobium vibrioforme subsp. thiosulfatophilum).